A 309-amino-acid polypeptide reads, in one-letter code: Transcription termination/antitermination protein NusG (309 aa).

2 disordered regions span residues 1-24 (MSDP…ADDE) and 58-91 (EGDH…VEAG). A compositionally biased stretch (acidic residues) spans 65-91 (TDEDIEAGAVETDEDVETDTDEDVEAG).

Belongs to the NusG family.

Functionally, participates in transcription elongation, termination and antitermination. The sequence is that of Transcription termination/antitermination protein NusG from Streptomyces galbus.